The primary structure comprises 61 residues: Transcription elongation factor Spt4 (61 aa).

4 residues coordinate Zn(2+): C6, C9, C18, and C21.

This sequence belongs to the archaeal Spt4 family. As to quaternary structure, heterodimer composed of Spt4 and Spt5.

Functionally, stimulates transcription elongation. The chain is Transcription elongation factor Spt4 from Pyrococcus furiosus (strain ATCC 43587 / DSM 3638 / JCM 8422 / Vc1).